We begin with the raw amino-acid sequence, 294 residues long: Energy-coupling factor transporter ATP-binding protein EcfA1 (294 aa).

Residues 27 to 260 (IEFENVYFAY…EERLLKMQLD (234 aa)) enclose the ABC transporter domain. 60-67 (GHNGSGKS) is an ATP binding site.

It belongs to the ABC transporter superfamily. Energy-coupling factor EcfA family. Forms a stable energy-coupling factor (ECF) transporter complex composed of 2 membrane-embedded substrate-binding proteins (S component), 2 ATP-binding proteins (A component) and 2 transmembrane proteins (T component).

Its subcellular location is the cell membrane. ATP-binding (A) component of a common energy-coupling factor (ECF) ABC-transporter complex. Unlike classic ABC transporters this ECF transporter provides the energy necessary to transport a number of different substrates. This Ureaplasma parvum serovar 3 (strain ATCC 700970) protein is Energy-coupling factor transporter ATP-binding protein EcfA1.